The primary structure comprises 124 residues: Small ribosomal subunit protein uS12 (124 aa).

Asp-89 carries the 3-methylthioaspartic acid modification.

It belongs to the universal ribosomal protein uS12 family. In terms of assembly, part of the 30S ribosomal subunit. Contacts proteins S8 and S17. May interact with IF1 in the 30S initiation complex.

Functionally, with S4 and S5 plays an important role in translational accuracy. Interacts with and stabilizes bases of the 16S rRNA that are involved in tRNA selection in the A site and with the mRNA backbone. Located at the interface of the 30S and 50S subunits, it traverses the body of the 30S subunit contacting proteins on the other side and probably holding the rRNA structure together. The combined cluster of proteins S8, S12 and S17 appears to hold together the shoulder and platform of the 30S subunit. This is Small ribosomal subunit protein uS12 (rpsL) from Mannheimia haemolytica (Pasteurella haemolytica).